The sequence spans 453 residues: Bifunctional protein GlmU (453 aa).

The pyrophosphorylase stretch occupies residues Met1–Arg227. UDP-N-acetyl-alpha-D-glucosamine-binding positions include Leu9–Gly12, Lys23, Gln74, Gly79–Thr80, Tyr101–Asp103, Gly138, Glu152, Asn167, and Asn225. Asp103 contributes to the Mg(2+) binding site. Asn225 is a Mg(2+) binding site. Residues Leu228–Ala248 form a linker region. The N-acetyltransferase stretch occupies residues Gly249–Lys453. Residues Arg331 and Lys349 each contribute to the UDP-N-acetyl-alpha-D-glucosamine site. The active-site Proton acceptor is the His361. Residues Tyr364 and Asn375 each coordinate UDP-N-acetyl-alpha-D-glucosamine. Residues Ala378, Asn384–Tyr385, Ser403, Ala421, and Arg438 contribute to the acetyl-CoA site.

In the N-terminal section; belongs to the N-acetylglucosamine-1-phosphate uridyltransferase family. It in the C-terminal section; belongs to the transferase hexapeptide repeat family. Homotrimer. It depends on Mg(2+) as a cofactor.

Its subcellular location is the cytoplasm. The catalysed reaction is alpha-D-glucosamine 1-phosphate + acetyl-CoA = N-acetyl-alpha-D-glucosamine 1-phosphate + CoA + H(+). It catalyses the reaction N-acetyl-alpha-D-glucosamine 1-phosphate + UTP + H(+) = UDP-N-acetyl-alpha-D-glucosamine + diphosphate. The protein operates within nucleotide-sugar biosynthesis; UDP-N-acetyl-alpha-D-glucosamine biosynthesis; N-acetyl-alpha-D-glucosamine 1-phosphate from alpha-D-glucosamine 6-phosphate (route II): step 2/2. It participates in nucleotide-sugar biosynthesis; UDP-N-acetyl-alpha-D-glucosamine biosynthesis; UDP-N-acetyl-alpha-D-glucosamine from N-acetyl-alpha-D-glucosamine 1-phosphate: step 1/1. It functions in the pathway bacterial outer membrane biogenesis; LPS lipid A biosynthesis. Its function is as follows. Catalyzes the last two sequential reactions in the de novo biosynthetic pathway for UDP-N-acetylglucosamine (UDP-GlcNAc). The C-terminal domain catalyzes the transfer of acetyl group from acetyl coenzyme A to glucosamine-1-phosphate (GlcN-1-P) to produce N-acetylglucosamine-1-phosphate (GlcNAc-1-P), which is converted into UDP-GlcNAc by the transfer of uridine 5-monophosphate (from uridine 5-triphosphate), a reaction catalyzed by the N-terminal domain. The polypeptide is Bifunctional protein GlmU (Histophilus somni (strain 2336) (Haemophilus somnus)).